The chain runs to 389 residues: MSEVTTQSKPERRKRQKLEDMEGYKPSIYGLTRDELIDWAVEHGEKKFRATQIWDWLYKKRVQSFEEMTNISKDFIAKLNDNFCVNPLKQRIVQESKDGTVKYLFELPDGMLIETVLMRQHYGLSVCVTTQVGCNIGCTFCASGLIKKQRDLTAGEIVAQIMLVQKYFDDRGDGERVSHVVVMGIGEPFDNYDNVLRFLRTINNDNGLAIGARHITVSTSGLAPKIKEFANEGVQVNLAVSLHAPNNDLRSSIMRINRSFPLEKLFEAIEYYIQTTNRRVTFEYIMLNEVNDHPENAQELADLTKKIRKLSYINLIPYNPVSEHDHYSRSTKERVATFYDVLKKNGVNCVVRQEHGTDIDAACGQLRSNTMKRDRQKAVAEASGKSEGK.

E114 serves as the catalytic Proton acceptor. Residues 120 to 358 (QHYGLSVCVT…CVVRQEHGTD (239 aa)) form the Radical SAM core domain. Cysteines 127 and 363 form a disulfide. [4Fe-4S] cluster-binding residues include C134, C138, and C141. Residues 186 to 187 (GE), S218, 241 to 243 (SLH), and N319 contribute to the S-adenosyl-L-methionine site. The S-methylcysteine intermediate role is filled by C363. The disordered stretch occupies residues 370-389 (TMKRDRQKAVAEASGKSEGK). Over residues 371–389 (MKRDRQKAVAEASGKSEGK) the composition is skewed to basic and acidic residues.

This sequence belongs to the radical SAM superfamily. RlmN family. Requires [4Fe-4S] cluster as cofactor.

It localises to the cytoplasm. The enzyme catalyses adenosine(2503) in 23S rRNA + 2 reduced [2Fe-2S]-[ferredoxin] + 2 S-adenosyl-L-methionine = 2-methyladenosine(2503) in 23S rRNA + 5'-deoxyadenosine + L-methionine + 2 oxidized [2Fe-2S]-[ferredoxin] + S-adenosyl-L-homocysteine. It catalyses the reaction adenosine(37) in tRNA + 2 reduced [2Fe-2S]-[ferredoxin] + 2 S-adenosyl-L-methionine = 2-methyladenosine(37) in tRNA + 5'-deoxyadenosine + L-methionine + 2 oxidized [2Fe-2S]-[ferredoxin] + S-adenosyl-L-homocysteine. Specifically methylates position 2 of adenine 2503 in 23S rRNA and position 2 of adenine 37 in tRNAs. This chain is Probable dual-specificity RNA methyltransferase RlmN, found in Streptococcus thermophilus (strain ATCC BAA-250 / LMG 18311).